A 640-amino-acid polypeptide reads, in one-letter code: Protein cereblon (640 aa).

Residues 1 to 11 (MDDEETAEIDE) are compositionally biased toward acidic residues. Disordered regions lie at residues 1-25 (MDDE…ELGP) and 92-159 (REDP…EAVP). Residues 113–137 (QPAQQEEQASLPYDSPSRASISSRH) are compositionally biased toward low complexity. A Lon N-terminal domain is found at 278-506 (RMLIFMHQHI…IIDTTLKQES (229 aa)). The region spanning 505 to 614 (ESLFYCRYCN…LAGSSVRIGK (110 aa)) is the CULT domain. The Zn(2+) site is built by Cys510, Cys513, Cys579, and Cys582.

It belongs to the CRBN family. As to quaternary structure, likely a component of a DCX (DDB1-CUL4-X-box) protein ligase complex. May interact with pic/DDB1. Post-translationally, ubiquitinated.

Its subcellular location is the nucleus. Its pathway is protein modification; protein ubiquitination. In terms of biological role, substrate recognition component of a DCX (DDB1-CUL4-X-box) E3 protein ligase complex that mediates the ubiquitination and subsequent proteasomal degradation of target proteins. Has an essential role in mediating growth by negatively regulating insulin signaling. It also has a role in maintaining presynaptic function in the neuromuscular junction synapses of third-instar larvae. This chain is Protein cereblon, found in Drosophila virilis (Fruit fly).